A 204-amino-acid polypeptide reads, in one-letter code: Large ribosomal subunit protein eL15 (204 aa).

The protein belongs to the eukaryotic ribosomal protein eL15 family. In terms of assembly, component of the large ribosomal subunit.

The protein localises to the cytoplasm. In terms of biological role, component of the large ribosomal subunit. The ribosome is a large ribonucleoprotein complex responsible for the synthesis of proteins in the cell. The protein is Large ribosomal subunit protein eL15 (rpl15) of Anguilla japonica (Japanese eel).